Here is a 632-residue protein sequence, read N- to C-terminus: tRNA uridine 5-carboxymethylaminomethyl modification enzyme MnmG (632 aa).

Residues 15-20, Ile127, and Ser182 contribute to the FAD site; that span reads GAGHAG. 276–290 serves as a coordination point for NAD(+); sequence GPRYCPSIEDKIVRF. Gln373 contributes to the FAD binding site.

Belongs to the MnmG family. Homodimer. Heterotetramer of two MnmE and two MnmG subunits. The cofactor is FAD.

The protein localises to the cytoplasm. Functionally, NAD-binding protein involved in the addition of a carboxymethylaminomethyl (cmnm) group at the wobble position (U34) of certain tRNAs, forming tRNA-cmnm(5)s(2)U34. The polypeptide is tRNA uridine 5-carboxymethylaminomethyl modification enzyme MnmG (Streptococcus pyogenes serotype M4 (strain MGAS10750)).